A 399-amino-acid polypeptide reads, in one-letter code: Phosphoglycerate kinase (399 aa).

Residues 22–24 (DLN), Arg37, 60–63 (HFGR), Arg119, and Arg152 each bind substrate. Residues Lys202, Glu324, and 354-357 (GGDT) contribute to the ATP site.

The protein belongs to the phosphoglycerate kinase family. Monomer.

Its subcellular location is the cytoplasm. The catalysed reaction is (2R)-3-phosphoglycerate + ATP = (2R)-3-phospho-glyceroyl phosphate + ADP. Its pathway is carbohydrate degradation; glycolysis; pyruvate from D-glyceraldehyde 3-phosphate: step 2/5. This Sinorhizobium fredii (strain NBRC 101917 / NGR234) protein is Phosphoglycerate kinase.